The primary structure comprises 428 residues: Serine--tRNA ligase (428 aa).

231-233 (TAE) serves as a coordination point for L-serine. 262-264 (RSE) serves as a coordination point for ATP. Residue Glu-285 coordinates L-serine. 349 to 352 (EISS) lines the ATP pocket. An L-serine-binding site is contributed by Ser-385.

It belongs to the class-II aminoacyl-tRNA synthetase family. Type-1 seryl-tRNA synthetase subfamily. As to quaternary structure, homodimer. The tRNA molecule binds across the dimer.

The protein resides in the cytoplasm. It catalyses the reaction tRNA(Ser) + L-serine + ATP = L-seryl-tRNA(Ser) + AMP + diphosphate + H(+). The catalysed reaction is tRNA(Sec) + L-serine + ATP = L-seryl-tRNA(Sec) + AMP + diphosphate + H(+). It participates in aminoacyl-tRNA biosynthesis; selenocysteinyl-tRNA(Sec) biosynthesis; L-seryl-tRNA(Sec) from L-serine and tRNA(Sec): step 1/1. Functionally, catalyzes the attachment of serine to tRNA(Ser). Is also able to aminoacylate tRNA(Sec) with serine, to form the misacylated tRNA L-seryl-tRNA(Sec), which will be further converted into selenocysteinyl-tRNA(Sec). The protein is Serine--tRNA ligase of Staphylococcus epidermidis (strain ATCC 35984 / DSM 28319 / BCRC 17069 / CCUG 31568 / BM 3577 / RP62A).